The chain runs to 128 residues: ATP synthase epsilon chain (128 aa).

It belongs to the ATPase epsilon chain family. As to quaternary structure, F-type ATPases have 2 components, CF(1) - the catalytic core - and CF(0) - the membrane proton channel. CF(1) has five subunits: alpha(3), beta(3), gamma(1), delta(1), epsilon(1). CF(0) has three main subunits: a, b and c.

It localises to the cell inner membrane. Produces ATP from ADP in the presence of a proton gradient across the membrane. In Sulfurovum sp. (strain NBC37-1), this protein is ATP synthase epsilon chain.